We begin with the raw amino-acid sequence, 153 residues long: Transcriptional repressor NrdR (153 aa).

Residues 1–20 form a disordered region; the sequence is MKCPFCNSADTRVKNSRHSD. Residues 3–34 fold into a zinc finger; the sequence is CPFCNSADTRVKNSRHSDDNMSVRRRRLCEVC. A compositionally biased stretch (basic and acidic residues) spans 11-20; that stretch reads TRVKNSRHSD. In terms of domain architecture, ATP-cone spans 49 to 139; the sequence is IMVLKKDGRM…VYMDFSDADD (91 aa).

This sequence belongs to the NrdR family. The cofactor is Zn(2+).

Its function is as follows. Negatively regulates transcription of bacterial ribonucleotide reductase nrd genes and operons by binding to NrdR-boxes. The chain is Transcriptional repressor NrdR from Anaplasma phagocytophilum (strain HZ).